The following is a 439-amino-acid chain: Vitellogenin-1 (439 aa).

Positions Met1–Lys20 are cleaved as a signal peptide. Positions Gln158–Ser175 are enriched in polar residues. Disordered regions lie at residues Gln158–Asn196 and Lys407–Gln439. Tyr171 is subject to Phosphotyrosine. Residues Ser175, Ser185, and Ser186 each carry the phosphoserine modification. The residue at position 190 (Tyr190) is a Phosphotyrosine. The residue at position 191 (Ser191) is a Phosphoserine. Positions Ala416 to Gln433 are enriched in polar residues. Ser435 is modified (phosphoserine).

Belongs to the AB hydrolase superfamily. Lipase family. In terms of processing, tyrosine sulfation occurs in the female only and plays an essential functional role. In terms of tissue distribution, expressed in females only.

It is found in the secreted. The protein localises to the vesicle. Functionally, vitellogenin is the major yolk protein of eggs where it is used as a food source during embryogenesis. Along with Yp2 and Yp3, and their receptor yl/yolkless, required for maintenance of microtubule plus-end orientation towards the posterior pole of oocytes. Involved in polarized localization of germ plasm components, such as osk mRNA and vas protein, to the oocyte posterior cortex. Receptor-mediated endocytosis by yl/yolkless is crucial for actin reorganization, mediated by osk isoform A/Long, required to anchor germ plasm components to the oocyte cortex. This Drosophila melanogaster (Fruit fly) protein is Vitellogenin-1 (Yp1).